The following is a 460-amino-acid chain: Glycogen synthase (460 aa).

ADP-alpha-D-glucose is bound at residue Lys-15.

Belongs to the glycosyltransferase 1 family. Bacterial/plant glycogen synthase subfamily.

It carries out the reaction [(1-&gt;4)-alpha-D-glucosyl](n) + ADP-alpha-D-glucose = [(1-&gt;4)-alpha-D-glucosyl](n+1) + ADP + H(+). Its pathway is glycan biosynthesis; glycogen biosynthesis. Functionally, synthesizes alpha-1,4-glucan chains using ADP-glucose. This is Glycogen synthase from Trichodesmium erythraeum (strain IMS101).